Reading from the N-terminus, the 310-residue chain is Methionyl-tRNA formyltransferase (310 aa).

109-112 (SLLP) contacts (6S)-5,6,7,8-tetrahydrofolate.

This sequence belongs to the Fmt family.

It carries out the reaction L-methionyl-tRNA(fMet) + (6R)-10-formyltetrahydrofolate = N-formyl-L-methionyl-tRNA(fMet) + (6S)-5,6,7,8-tetrahydrofolate + H(+). In terms of biological role, attaches a formyl group to the free amino group of methionyl-tRNA(fMet). The formyl group appears to play a dual role in the initiator identity of N-formylmethionyl-tRNA by promoting its recognition by IF2 and preventing the misappropriation of this tRNA by the elongation apparatus. This chain is Methionyl-tRNA formyltransferase, found in Pseudomonas putida (strain W619).